Reading from the N-terminus, the 190-residue chain is MASFSTNEFKSGLKVMLDGNPCAILENEFVKPGKGQAFNRVKLRNLRSGKVLEQTFKSGDSLEAADVMDTEMNYLYNDGEFWHFMHPESFEQIQADKTAMSDSIKWLKENSNALCTITLFNGAPLSVTPPNFVELQITETDPGVRGDTSGGGGKPATLETGAVVRVPLFVQQGEVVRVDTRTGDYQTRVS.

Lys-34 is subject to N6-(3,6-diaminohexanoyl)-5-hydroxylysine.

Belongs to the elongation factor P family. Post-translationally, may be beta-lysylated on the epsilon-amino group of Lys-34 by the combined action of EpmA and EpmB, and then hydroxylated on the C5 position of the same residue by EpmC (if this protein is present). Lysylation is critical for the stimulatory effect of EF-P on peptide-bond formation. The lysylation moiety may extend toward the peptidyltransferase center and stabilize the terminal 3-CCA end of the tRNA. Hydroxylation of the C5 position on Lys-34 may allow additional potential stabilizing hydrogen-bond interactions with the P-tRNA.

It localises to the cytoplasm. The protein operates within protein biosynthesis; polypeptide chain elongation. Its function is as follows. Involved in peptide bond synthesis. Alleviates ribosome stalling that occurs when 3 or more consecutive Pro residues or the sequence PPG is present in a protein, possibly by augmenting the peptidyl transferase activity of the ribosome. Modification of Lys-34 is required for alleviation. In Psychrobacter cryohalolentis (strain ATCC BAA-1226 / DSM 17306 / VKM B-2378 / K5), this protein is Elongation factor P.